Here is a 144-residue protein sequence, read N- to C-terminus: Neuritin-A (144 aa).

The N-terminal stretch at 1-27 (MGLKLSGRYIFLVLAVHLAYLLQAVKA) is a signal peptide. Residue S114 is the site of GPI-anchor amidated serine attachment. Residues 115-144 (AGAPGQRLLFPAFLPLLMVFLSTLFILVLQ) constitute a propeptide, removed in mature form.

It belongs to the neuritin family. In terms of tissue distribution, expressed in sensory regions of the brain including the visual, auditory and olfactory systems. Within the retina, only expressed in the retinal ganglion cells. Concentrated in axon tracts including retinal axons.

It is found in the cell membrane. Functionally, modulates postsynaptic dendritic arbor elaboration and synaptic maturation. This is Neuritin-A (nrn1-a) from Xenopus laevis (African clawed frog).